The chain runs to 92 residues: Small ribosomal subunit protein uS19c (92 aa).

It belongs to the universal ribosomal protein uS19 family.

The protein localises to the plastid. It is found in the chloroplast. Functionally, protein S19 forms a complex with S13 that binds strongly to the 16S ribosomal RNA. This Guizotia abyssinica (Niger) protein is Small ribosomal subunit protein uS19c.